Consider the following 468-residue polypeptide: VGFKXGVXEYKLTYYTPEXETKDTDILAAFRVTPQPGVPPEEAGXAVAAESSTGTWTTVWTDGLTSLDRYKGRCYHIEPVPGEADQYICYVAYPLDLFEEGSVTNMFTSIVGNVFGFKALRALRLEDLRIPPAYIKTFQGPPHGIQVERDKLNKYGRPLLGCTIKPKLGLSAKNYGRAVYECLRGGLDFTKDDENVNSQPFMRWRDRFLFCAEALYKAQAETGEIKGHYLNATAGTCEEMIKRAVFARELGVPIVMHDYLTGGFTANTSLAHYCRDNGLLLHIHRAMHAVIDRQKNHGIHFRVLAKALRMSGGDHIHAGTVVGKLEGERDITLGFVDLLRDDFIEKDRSRGIYFTQDWVSLPGVIPVASGGIHVWHMPALTEIFGDXSVLQFGGGTLGXPWGNAPGAVANRVALEACVKARNEGRDLAAEGNTIIREASKWSPELAAACEVWKEIKFEFAAVDTLDRE.

Lysine 4 is modified (N6,N6,N6-trimethyllysine). The substrate site is built by asparagine 113 and threonine 163. Catalysis depends on lysine 165, which acts as the Proton acceptor. Residue lysine 167 coordinates substrate. 3 residues coordinate Mg(2+): lysine 191, aspartate 193, and glutamate 194. Lysine 191 carries the N6-carboxylysine modification. Histidine 284 functions as the Proton acceptor in the catalytic mechanism. Residues arginine 285, histidine 317, and serine 369 each coordinate substrate.

The protein belongs to the RuBisCO large chain family. Type I subfamily. In terms of assembly, heterohexadecamer of 8 large chains and 8 small chains; disulfide-linked. The disulfide link is formed within the large subunit homodimers. The cofactor is Mg(2+). In terms of processing, the disulfide bond which can form in the large chain dimeric partners within the hexadecamer appears to be associated with oxidative stress and protein turnover.

It is found in the plastid. The protein localises to the chloroplast. It carries out the reaction 2 (2R)-3-phosphoglycerate + 2 H(+) = D-ribulose 1,5-bisphosphate + CO2 + H2O. The enzyme catalyses D-ribulose 1,5-bisphosphate + O2 = 2-phosphoglycolate + (2R)-3-phosphoglycerate + 2 H(+). Functionally, ruBisCO catalyzes two reactions: the carboxylation of D-ribulose 1,5-bisphosphate, the primary event in carbon dioxide fixation, as well as the oxidative fragmentation of the pentose substrate in the photorespiration process. Both reactions occur simultaneously and in competition at the same active site. This Pandorea jasminoides (Bower vine) protein is Ribulose bisphosphate carboxylase large chain.